A 430-amino-acid polypeptide reads, in one-letter code: Enolase (430 aa).

Gln163 is a binding site for (2R)-2-phosphoglycerate. The active-site Proton donor is Glu205. Mg(2+) contacts are provided by Asp242, Glu287, and Asp314. Positions 339, 368, 369, and 390 each coordinate (2R)-2-phosphoglycerate. Lys339 acts as the Proton acceptor in catalysis.

The protein belongs to the enolase family. Mg(2+) is required as a cofactor.

It localises to the cytoplasm. The protein localises to the secreted. The protein resides in the cell surface. The enzyme catalyses (2R)-2-phosphoglycerate = phosphoenolpyruvate + H2O. It participates in carbohydrate degradation; glycolysis; pyruvate from D-glyceraldehyde 3-phosphate: step 4/5. Its function is as follows. Catalyzes the reversible conversion of 2-phosphoglycerate (2-PG) into phosphoenolpyruvate (PEP). It is essential for the degradation of carbohydrates via glycolysis. The protein is Enolase of Listeria innocua serovar 6a (strain ATCC BAA-680 / CLIP 11262).